Consider the following 285-residue polypeptide: Ribosomal RNA small subunit methyltransferase A (285 aa).

Residues histidine 27, leucine 29, glycine 54, glutamate 75, aspartate 100, and asparagine 120 each contribute to the S-adenosyl-L-methionine site.

Belongs to the class I-like SAM-binding methyltransferase superfamily. rRNA adenine N(6)-methyltransferase family. RsmA subfamily.

It localises to the cytoplasm. It carries out the reaction adenosine(1518)/adenosine(1519) in 16S rRNA + 4 S-adenosyl-L-methionine = N(6)-dimethyladenosine(1518)/N(6)-dimethyladenosine(1519) in 16S rRNA + 4 S-adenosyl-L-homocysteine + 4 H(+). Functionally, specifically dimethylates two adjacent adenosines (A1518 and A1519) in the loop of a conserved hairpin near the 3'-end of 16S rRNA in the 30S particle. May play a critical role in biogenesis of 30S subunits. The protein is Ribosomal RNA small subunit methyltransferase A of Phenylobacterium zucineum (strain HLK1).